A 347-amino-acid polypeptide reads, in one-letter code: MVKSENQIIKSSLHLENQKFGRKPQLSEDLFELFPSICTESKIEVIGLDLQPSHYHALAAIQKLLTATNYRGNLEGSYLSRETNTFKFEGTIPRIKFTKSEYLEAYGVKKYKTSRNKNEFGGKEALIALEALYHLGNEPYLIVATRKRWNKGEEVVDRYQTFSPILRICEGWEGLTPKENKALDEEPFLNLISKKHKGFIIEPCPIIVDQIDSYFVLKPANMYQEIKLRFPNASKFTYTFIDWIVSTATRKKMNSSGSKEWPDKIEIGFENLSYTLRMNRYITSRNWKKIESAINRCIEIAIELKWLNKHERIQGKTISKKEVFYLNKSKFQQISTNKTIQSTTNKN.

This is Virulence plasmid protein pGP2-D from Chlamydia psittaci (Chlamydophila psittaci).